The sequence spans 876 residues: MNPFSSGTRLRDMIRAIRACKTAAEERAVVRKECADIRALINEDDPHDRHRNLAKLMFIHMLGYPTHFGQMECLKLIASPGFPEKRIGYLGLMLLLDERQEVLMLVTNSLKQDLNHSNQYVVGLALCALGNICSAEMARDLAPEVERLIQFRDPNIRKKAALCSTRIIRKVPDLAENFVNAAASLLKEKHHGVLITGVQLCYELCTINDEALEYFRTKCTEGLIKTLRDITNSAYQPEYDVAGITDPFLHIRLLRLLRVLGQGDADASDLMTDILAQVATKTESNKNAGNAVLYECVETIMAIEDTNSLRVLAINILGRFLSNRDNNIRYVALNMLMKAITFDDQAVQRHRVTILECVKDPDASIRKRALELVTLLVNENNVTQLTKELIDYLEISDEDFKEDLSAKICFIVEKFSPEKLWYIDQMLKVLCEAGKFVKDDVWHALIVVISNASELHGYTVRALYKSVLTYSEQETLVRVAVWCIGEYGDLLVNNVGMLGIEDPITVTESDAVDVIEDAITRHNSDSTTKAMALVALLKLSSRFPSISERIKDIIVKQKGSLLLEMQQRAIEYNSIVDRHKNIRSSLVDRMPVLDEATFNVRRAGSFPASVSTMAKPSVSLQNGVEKLPVAPLVDLLDLDSDDIMAAPSPSGTDFLQDLLGVDLGSSSAQYGATQAPKAGTDLLLDILSIGTPSPAQNSTSSIGLLSIADVNNNPSIALDTLSSPAPPHVATTSSTGMFDLLDGLSPSPSKEATNGPAYAPIVAYESSSLKIEFTFSKTPGNLQTTNVQATFTNLSPNTFTDFIFQAAVPKFLQLHLDPASSNTLLASGSGAITQNLRVTNSQQGKKSLVMRMRIGYKLNGKDVLEEGQVSNFPRGL.

9 HEAT repeats span residues 97–135 (DERQEVLMLVTNSLKQDLNHSNQYVVGLALCALGNICSA), 136–173 (EMARDLAPEVERLIQFRDPNIRKKAALCSTRIIRKVPD), 248–284 (FLHIRLLRLLRVLGQGDADASDLMTDILAQVATKTES), 308–345 (SLRVLAINILGRFLSNRDNNIRYVALNMLMKAITFDDQ), 346–382 (AVQRHRVTILECVKDPDASIRKRALELVTLLVNENNV), 384–417 (QLTKELIDYLEISDEDFKEDLSAKICFIVEKFSP), 418–454 (EKLWYIDQMLKVLCEAGKFVKDDVWHALIVVISNASE), 506–545 (VTESDAVDVIEDAITRHNSDSTTKAMALVALLKLSSRFPS), and 560–599 (SLLLEMQQRAIEYNSIVDRHKNIRSSLVDRMPVLDEATFN). Residues 756-873 (PAYAPIVAYE…LEEGQVSNFP (118 aa)) enclose the GAE domain.

It belongs to the adaptor complexes large subunit family. In terms of assembly, adaptor protein complex 1 (AP-1) is a heterotetramer composed of two large adaptins (gamma-type subunit and beta-type subunit), a medium adaptin (mu-type subunit) and a small adaptin (sigma-type subunit). Binds to EPSIN1. Interacts with DRP2A/ADL6 (via C-terminus).

It is found in the golgi apparatus. It localises to the cytoplasmic vesicle. The protein localises to the clathrin-coated vesicle membrane. In terms of biological role, subunit of clathrin-associated adaptor protein complex 1 that plays a role in protein sorting at the trans-Golgi network and early endosomes (TGN/EE). The AP complexes mediate both the recruitment of clathrin to membranes and the recognition of sorting signals within the cytosolic tails of transmembrane cargo molecules. This chain is AP-1 complex subunit gamma-1 (GAMMA-ADR), found in Arabidopsis thaliana (Mouse-ear cress).